The sequence spans 235 residues: V-type proton ATPase subunit E2 (235 aa).

At M1 the chain carries N-acetylmethionine. Positions K8–I64 form a coiled coil.

This sequence belongs to the V-ATPase E subunit family. V-ATPase is a heteromultimeric enzyme composed of a peripheral catalytic V1 complex (components A to H) attached to an integral membrane V0 proton pore complex (components: a, c, c'', d and e).

Its subcellular location is the vacuole membrane. Subunit of the peripheral V1 complex of vacuolar ATPase essential for assembly or catalytic function. V-ATPase is responsible for acidifying a variety of intracellular compartments in eukaryotic cells. This Arabidopsis thaliana (Mouse-ear cress) protein is V-type proton ATPase subunit E2 (VHA-E2).